The following is a 442-amino-acid chain: MSEMTPREIVHELDRHIIGQADAKRAVAVALRNRWRRMQLDEEMRHEVTPKNILMIGPTGVGKTEIARRLAKLANAPFIKVEATKFTEVGYVGKEVDSIIRDLTDAAIKLVRETEMEKMKYRAEEAAEERILDALLPNPRNSWGEEEKADNSNTRQIFRKKLREGQLDDKEIELELAASPMGVEIMTPPGMEEMANQLQGLFQNLGQNQKKKRKIKVKEAMKALIEEEAARLVNPEELKQKAIAAVENNGIVFLDEIDKICKRGESSGPDVSREGVQRDLLPLVEGCTVNTKHGMVKTDHILFVASGAFQIAKPSDLIPELQGRLPIRVELTALTTDDFERILTEPNASLTDQYQALMATEGVKIEFTKDGIRRLAEAAWQVNERTENIGARRLHTVMERLMEDISYDASEKSGETFVIDTDYVNAHLGKLIEDEDLSRFIL.

ATP contacts are provided by residues isoleucine 18, 60-65, aspartate 255, glutamate 320, and arginine 392; that span reads GVGKTE.

Belongs to the ClpX chaperone family. HslU subfamily. As to quaternary structure, a double ring-shaped homohexamer of HslV is capped on each side by a ring-shaped HslU homohexamer. The assembly of the HslU/HslV complex is dependent on binding of ATP.

It localises to the cytoplasm. In terms of biological role, ATPase subunit of a proteasome-like degradation complex; this subunit has chaperone activity. The binding of ATP and its subsequent hydrolysis by HslU are essential for unfolding of protein substrates subsequently hydrolyzed by HslV. HslU recognizes the N-terminal part of its protein substrates and unfolds these before they are guided to HslV for hydrolysis. The chain is ATP-dependent protease ATPase subunit HslU from Aeromonas hydrophila subsp. hydrophila (strain ATCC 7966 / DSM 30187 / BCRC 13018 / CCUG 14551 / JCM 1027 / KCTC 2358 / NCIMB 9240 / NCTC 8049).